Reading from the N-terminus, the 360-residue chain is DNA replication and repair protein RecF (360 aa).

33 to 40 (GENGSGKT) is an ATP binding site.

Belongs to the RecF family.

The protein resides in the cytoplasm. Functionally, the RecF protein is involved in DNA metabolism; it is required for DNA replication and normal SOS inducibility. RecF binds preferentially to single-stranded, linear DNA. It also seems to bind ATP. This Rickettsia peacockii (strain Rustic) protein is DNA replication and repair protein RecF.